Reading from the N-terminus, the 275-residue chain is Fructose permease IID component (275 aa).

In terms of domain architecture, PTS EIID spans 5 to 274; the sequence is KRLTKKEIFS…GILGYWAGFL (270 aa). Transmembrane regions (helical) follow at residues 100-120, 127-147, 187-207, 227-247, and 255-275; these read MKIG…WGTI, LGAS…FFLL, ILGL…NIPI, VLDS…VAWM, and LLII…GFLA.

The protein localises to the cell membrane. In terms of biological role, the phosphoenolpyruvate-dependent sugar phosphotransferase system (PTS), a major carbohydrate active -transport system, catalyzes the phosphorylation of incoming sugar substrates concomitant with their translocation across the cell membrane. This system is involved in fructose transport. This Bacillus subtilis (strain 168) protein is Fructose permease IID component (levG).